Reading from the N-terminus, the 217-residue chain is Large ribosomal subunit protein uL1 (217 aa).

The protein belongs to the universal ribosomal protein uL1 family. Part of the 50S ribosomal subunit.

Functionally, binds directly to 23S rRNA. The L1 stalk is quite mobile in the ribosome, and is involved in E site tRNA release. Its function is as follows. Protein L1 is also a translational repressor protein, it controls the translation of the L11 operon by binding to its mRNA. The chain is Large ribosomal subunit protein uL1 from Anaplasma marginale (strain St. Maries).